Consider the following 363-residue polypeptide: 3-dehydroquinate synthase (363 aa).

NAD(+) contacts are provided by residues Thr-134–Thr-135, Lys-147, Lys-156, and Thr-174–Thr-177. The Zn(2+) site is built by Glu-189, His-254, and His-271.

The protein belongs to the sugar phosphate cyclases superfamily. Dehydroquinate synthase family. NAD(+) serves as cofactor. The cofactor is Co(2+). Requires Zn(2+) as cofactor.

It localises to the cytoplasm. It catalyses the reaction 7-phospho-2-dehydro-3-deoxy-D-arabino-heptonate = 3-dehydroquinate + phosphate. The protein operates within metabolic intermediate biosynthesis; chorismate biosynthesis; chorismate from D-erythrose 4-phosphate and phosphoenolpyruvate: step 2/7. Its function is as follows. Catalyzes the conversion of 3-deoxy-D-arabino-heptulosonate 7-phosphate (DAHP) to dehydroquinate (DHQ). The chain is 3-dehydroquinate synthase from Prochlorococcus marinus subsp. pastoris (strain CCMP1986 / NIES-2087 / MED4).